The following is an 864-amino-acid chain: Leucine--tRNA ligase (864 aa).

A 'HIGH' region motif is present at residues 42–52 (PYPSGKLHMGH). Positions 624–628 (KMSKS) match the 'KMSKS' region motif. Lys627 is a binding site for ATP.

Belongs to the class-I aminoacyl-tRNA synthetase family.

The protein resides in the cytoplasm. The enzyme catalyses tRNA(Leu) + L-leucine + ATP = L-leucyl-tRNA(Leu) + AMP + diphosphate. The polypeptide is Leucine--tRNA ligase (Burkholderia pseudomallei (strain 1106a)).